A 228-amino-acid polypeptide reads, in one-letter code: Expansin-B13 (228 aa).

The signal sequence occupies residues 1 to 22 (MASSSLLLASVVVAAMVSAVSC). N-linked (GlcNAc...) asparagine glycosylation is present at Asn-32. The Expansin-like EG45 domain maps to 61–172 (SGACGYKDVD…KEKGSEEWKA (112 aa)). Cystine bridges form between Cys-64–Cys-92 and Cys-100–Cys-106. Positions 142–223 (GKDEELLKYV…GWKADSVYKS (82 aa)) constitute an Expansin-like CBD domain.

Belongs to the expansin family. Expansin B subfamily.

Its subcellular location is the secreted. The protein localises to the cell wall. It is found in the membrane. May cause loosening and extension of plant cell walls by disrupting non-covalent bonding between cellulose microfibrils and matrix glucans. No enzymatic activity has been found. May be required for rapid internodal elongation in deepwater rice during submergence. The chain is Expansin-B13 (EXPB13) from Oryza sativa subsp. japonica (Rice).